We begin with the raw amino-acid sequence, 207 residues long: dTTP/UTP pyrophosphatase (207 aa).

Residue aspartate 80 is the Proton acceptor of the active site.

Belongs to the Maf family. YhdE subfamily. A divalent metal cation is required as a cofactor.

It localises to the cytoplasm. The enzyme catalyses dTTP + H2O = dTMP + diphosphate + H(+). It catalyses the reaction UTP + H2O = UMP + diphosphate + H(+). In terms of biological role, nucleoside triphosphate pyrophosphatase that hydrolyzes dTTP and UTP. May have a dual role in cell division arrest and in preventing the incorporation of modified nucleotides into cellular nucleic acids. This chain is dTTP/UTP pyrophosphatase (maf1), found in Agrobacterium fabrum (strain C58 / ATCC 33970) (Agrobacterium tumefaciens (strain C58)).